The chain runs to 164 residues: Shikimate kinase (164 aa).

Residue 10–15 (GVGKTT) coordinates ATP. Position 14 (Thr-14) interacts with Mg(2+). 3 residues coordinate substrate: Asp-28, Arg-52, and Gly-75. Arg-116 is an ATP binding site. Arg-134 contacts substrate. Position 151 (Arg-151) interacts with ATP.

Belongs to the shikimate kinase family. In terms of assembly, monomer. Mg(2+) is required as a cofactor.

Its subcellular location is the cytoplasm. The catalysed reaction is shikimate + ATP = 3-phosphoshikimate + ADP + H(+). The protein operates within metabolic intermediate biosynthesis; chorismate biosynthesis; chorismate from D-erythrose 4-phosphate and phosphoenolpyruvate: step 5/7. Functionally, catalyzes the specific phosphorylation of the 3-hydroxyl group of shikimic acid using ATP as a cosubstrate. The polypeptide is Shikimate kinase (Streptococcus equi subsp. zooepidemicus (strain MGCS10565)).